The chain runs to 341 residues: Protein pelota homolog (341 aa).

The protein belongs to the eukaryotic release factor 1 family. Pelota subfamily. In terms of assembly, monomer. The cofactor is a divalent metal cation.

Its subcellular location is the cytoplasm. Its function is as follows. May function in recognizing stalled ribosomes, interact with stem-loop structures in stalled mRNA molecules, and effect endonucleolytic cleavage of the mRNA. May play a role in the release non-functional ribosomes and degradation of damaged mRNAs. Has endoribonuclease activity. This Methanospirillum hungatei JF-1 (strain ATCC 27890 / DSM 864 / NBRC 100397 / JF-1) protein is Protein pelota homolog.